Consider the following 145-residue polypeptide: Basic phospholipase A2 PC14 (145 aa).

The signal sequence occupies residues 1–21 (MYPAHLLLLLAVCVSLLGASA). The propeptide occupies 22-27 (IPPLPL). Disulfide bonds link cysteine 38/cysteine 98, cysteine 54/cysteine 144, cysteine 56/cysteine 72, cysteine 71/cysteine 125, cysteine 78/cysteine 118, cysteine 87/cysteine 111, and cysteine 105/cysteine 116. 3 residues coordinate Ca(2+): tyrosine 55, glycine 57, and glycine 59. The active site involves histidine 75. A Ca(2+)-binding site is contributed by aspartate 76. Aspartate 119 is an active-site residue.

Belongs to the phospholipase A2 family. Group I subfamily. D49 sub-subfamily. Requires Ca(2+) as cofactor.

It is found in the secreted. The enzyme catalyses a 1,2-diacyl-sn-glycero-3-phosphocholine + H2O = a 1-acyl-sn-glycero-3-phosphocholine + a fatty acid + H(+). Its function is as follows. PLA2 catalyzes the calcium-dependent hydrolysis of the 2-acyl groups in 3-sn-phosphoglycerides. This Laticauda laticaudata (Blue-ringed sea krait) protein is Basic phospholipase A2 PC14.